The primary structure comprises 236 residues: uncharacterized protein (236 aa).

An N-terminal signal peptide occupies residues 1–26 (MTNTWNRLALLIFAVLSLLVAGELQA).

This sequence belongs to the periplasmic pilus chaperone family.

Its subcellular location is the periplasm. Its function is as follows. Part of the elfADCG-ycbUVF fimbrial operon, which promotes adhesion of bacteria to different abiotic surfaces. Could be required for the biogenesis of fimbriae. This is an uncharacterized protein from Escherichia coli (strain K12).